Consider the following 359-residue polypeptide: UDP-N-acetylglucosamine--N-acetylmuramyl-(pentapeptide) pyrophosphoryl-undecaprenol N-acetylglucosamine transferase (359 aa).

UDP-N-acetyl-alpha-D-glucosamine is bound by residues 13–15 (TAG), Asn-125, Arg-161, Ser-193, Ile-241, and Gln-285.

This sequence belongs to the glycosyltransferase 28 family. MurG subfamily.

Its subcellular location is the cell membrane. The enzyme catalyses di-trans,octa-cis-undecaprenyl diphospho-N-acetyl-alpha-D-muramoyl-L-alanyl-D-glutamyl-meso-2,6-diaminopimeloyl-D-alanyl-D-alanine + UDP-N-acetyl-alpha-D-glucosamine = di-trans,octa-cis-undecaprenyl diphospho-[N-acetyl-alpha-D-glucosaminyl-(1-&gt;4)]-N-acetyl-alpha-D-muramoyl-L-alanyl-D-glutamyl-meso-2,6-diaminopimeloyl-D-alanyl-D-alanine + UDP + H(+). It functions in the pathway cell wall biogenesis; peptidoglycan biosynthesis. In terms of biological role, cell wall formation. Catalyzes the transfer of a GlcNAc subunit on undecaprenyl-pyrophosphoryl-MurNAc-pentapeptide (lipid intermediate I) to form undecaprenyl-pyrophosphoryl-MurNAc-(pentapeptide)GlcNAc (lipid intermediate II). The chain is UDP-N-acetylglucosamine--N-acetylmuramyl-(pentapeptide) pyrophosphoryl-undecaprenol N-acetylglucosamine transferase from Corynebacterium diphtheriae (strain ATCC 700971 / NCTC 13129 / Biotype gravis).